Consider the following 210-residue polypeptide: 2-dehydro-3-deoxy-phosphogluconate aldolase (210 aa).

Catalysis depends on E41, which acts as the Proton acceptor. The pyruvate site is built by R45, T69, and K129. K129 serves as the catalytic Schiff-base intermediate with substrate.

The protein belongs to the KHG/KDPG aldolase family. As to quaternary structure, homotrimer.

It localises to the cytoplasm. The enzyme catalyses 2-dehydro-3-deoxy-6-phospho-D-gluconate = D-glyceraldehyde 3-phosphate + pyruvate. Its pathway is carbohydrate acid metabolism; 2-dehydro-3-deoxy-D-gluconate degradation; D-glyceraldehyde 3-phosphate and pyruvate from 2-dehydro-3-deoxy-D-gluconate: step 2/2. In terms of biological role, catalyzes the reversible, stereospecific retro-aldol cleavage of 2-keto-3-deoxy-6-phosphogluconate (KDPG) to pyruvate and D-glyceraldehyde-3-phosphate. The polypeptide is 2-dehydro-3-deoxy-phosphogluconate aldolase (eda) (Treponema pallidum (strain Nichols)).